Consider the following 199-residue polypeptide: FMN-dependent NADH:quinone oxidoreductase 4 (199 aa).

FMN is bound by residues Ser10, Met95–Leu98, and Ser139–Gly142.

This sequence belongs to the azoreductase type 1 family. As to quaternary structure, homodimer. It depends on FMN as a cofactor.

It carries out the reaction 2 a quinone + NADH + H(+) = 2 a 1,4-benzosemiquinone + NAD(+). The catalysed reaction is N,N-dimethyl-1,4-phenylenediamine + anthranilate + 2 NAD(+) = 2-(4-dimethylaminophenyl)diazenylbenzoate + 2 NADH + 2 H(+). Functionally, quinone reductase that provides resistance to thiol-specific stress caused by electrophilic quinones. Also exhibits azoreductase activity. Catalyzes the reductive cleavage of the azo bond in aromatic azo compounds to the corresponding amines. The polypeptide is FMN-dependent NADH:quinone oxidoreductase 4 (Burkholderia lata (strain ATCC 17760 / DSM 23089 / LMG 22485 / NCIMB 9086 / R18194 / 383)).